A 342-amino-acid polypeptide reads, in one-letter code: MSASASSLSAFNPKSLPLCVSRPASVSVLPPSLSFKLHSDHLVSIFASSALKCSSPAEYPSRFVRNVAVSSDFEVEEDDMFADGDDSAPVERNSFSPDLKLFVGNLSFNVDSAQLAQLFESAGNVEMVEVIYDKVTGRSRGFGFVTMSTAAEVEAAAQQFNGYEFEGRPLRVNAGPPPPKREESFSRGPRSGGYGSERGGGYGSERGGGYGSERGGGYGSERGGGYGSQRSGGGYGGSQRSSYGSGSGSGSGSGSGNRLYVGNLSWGVDDMALENLFNEQGKVVEARVIYDRDSGRSKGFGFVTLSSSQEVQKAINSLNGADLDGRQIRVSEAEARPPRGQF.

A chloroplast-targeting transit peptide spans 1–65; sequence MSASASSLSA…PAEYPSRFVR (65 aa). The RRM 1 domain occupies 99 to 177; it reads LKLFVGNLSF…RPLRVNAGPP (79 aa). Ser107 and Ser204 each carry phosphoserine. A disordered region spans residues 167 to 255; the sequence is GRPLRVNAGP…GSGSGSGSGS (89 aa). Residues 178–256 are linker (Gly-rich); sequence PPKREESFSR…SGSGSGSGSG (79 aa). Gly residues-rich tracts occupy residues 190–237 and 245–255; these read RSGG…GYGG and SGSGSGSGSGS. The 79-residue stretch at 257 to 335 folds into the RRM 2 domain; the sequence is NRLYVGNLSW…RQIRVSEAEA (79 aa).

It localises to the plastid. Its subcellular location is the chloroplast. In terms of biological role, stabilizes specific chloroplast mRNAs. Required for normal chloroplast development under cold stress conditions by stabilizing transcripts of numerous mRNAs under these conditions. This is 29 kDa ribonucleoprotein, chloroplastic from Arabidopsis thaliana (Mouse-ear cress).